Reading from the N-terminus, the 155-residue chain is SsrA-binding protein (155 aa).

Belongs to the SmpB family.

The protein resides in the cytoplasm. In terms of biological role, required for rescue of stalled ribosomes mediated by trans-translation. Binds to transfer-messenger RNA (tmRNA), required for stable association of tmRNA with ribosomes. tmRNA and SmpB together mimic tRNA shape, replacing the anticodon stem-loop with SmpB. tmRNA is encoded by the ssrA gene; the 2 termini fold to resemble tRNA(Ala) and it encodes a 'tag peptide', a short internal open reading frame. During trans-translation Ala-aminoacylated tmRNA acts like a tRNA, entering the A-site of stalled ribosomes, displacing the stalled mRNA. The ribosome then switches to translate the ORF on the tmRNA; the nascent peptide is terminated with the 'tag peptide' encoded by the tmRNA and targeted for degradation. The ribosome is freed to recommence translation, which seems to be the essential function of trans-translation. The sequence is that of SsrA-binding protein from Bordetella bronchiseptica (strain ATCC BAA-588 / NCTC 13252 / RB50) (Alcaligenes bronchisepticus).